Here is a 508-residue protein sequence, read N- to C-terminus: Tryptamine 4-monooxygenase (508 aa).

An N-terminal signal peptide occupies residues 1–19 (MIAVLFSFVIAGCIYYIVS). Cysteine 439 serves as a coordination point for heme.

The protein belongs to the cytochrome P450 family. Heme is required as a cofactor.

The catalysed reaction is tryptamine + AH2 + O2 = 4-hydroxytryptamine + A + H2O. The protein operates within secondary metabolite biosynthesis. Its function is as follows. Cytochrome P450 monooxygenase; part of the gene cluster that mediates the biosynthesis of psilocybin, a psychotropic tryptamine-derived natural product. The first step in the pathway is the decarboxylation of L-tryptophan to tryptamine by the decarboxylase psiD. 4-hydroxy-L-tryptophan is accepted as substrate by psiD as well. The cytochrome P450 monooxygenase psiH then converts tryptamine to 4-hydroxytryptamine. The kinase psiK catalyzes the 4-O-phosphorylation step by converting 4-hydroxytryptamine into norbaeocystin. The methyltransferase psiM then catalyzes iterative methyl transfer to the amino group of norbaeocystin to yield psilocybin via a monomethylated intermediate, baeocystin. The chain is Tryptamine 4-monooxygenase from Psilocybe cubensis (Psychedelic mushroom).